The sequence spans 174 residues: Interleukin-1 receptor antagonist protein (174 aa).

Residues 1–23 form the signal peptide; sequence MDIYIHGYLICLLLFLFRSETAC. Residues cysteine 89 and cysteine 139 are joined by a disulfide bond. An N-linked (GlcNAc...) asparagine glycan is attached at asparagine 107.

The protein belongs to the IL-1 family.

The protein resides in the secreted. Its function is as follows. Anti-inflammatory antagonist of interleukin-1 family of proinflammatory cytokines such as interleukin-1beta/IL1B and interleukin-1alpha/IL1A. Protects from immune dysregulation and uncontrolled systemic inflammation triggered by IL1 for a range of innate stimulatory agents such as pathogens. The sequence is that of Interleukin-1 receptor antagonist protein (IL1RN) from Bos taurus (Bovine).